A 312-amino-acid polypeptide reads, in one-letter code: Aspartate carbamoyltransferase catalytic subunit (312 aa).

Positions 58 and 59 each coordinate carbamoyl phosphate. An L-aspartate-binding site is contributed by Lys86. Residues Arg108, His136, and Gln139 each coordinate carbamoyl phosphate. Residues Arg169 and Arg223 each contribute to the L-aspartate site. Positions 264 and 265 each coordinate carbamoyl phosphate.

This sequence belongs to the aspartate/ornithine carbamoyltransferase superfamily. ATCase family. In terms of assembly, heterododecamer (2C3:3R2) of six catalytic PyrB chains organized as two trimers (C3), and six regulatory PyrI chains organized as three dimers (R2).

It catalyses the reaction carbamoyl phosphate + L-aspartate = N-carbamoyl-L-aspartate + phosphate + H(+). Its pathway is pyrimidine metabolism; UMP biosynthesis via de novo pathway; (S)-dihydroorotate from bicarbonate: step 2/3. In terms of biological role, catalyzes the condensation of carbamoyl phosphate and aspartate to form carbamoyl aspartate and inorganic phosphate, the committed step in the de novo pyrimidine nucleotide biosynthesis pathway. The chain is Aspartate carbamoyltransferase catalytic subunit from Desulforamulus reducens (strain ATCC BAA-1160 / DSM 100696 / MI-1) (Desulfotomaculum reducens).